Reading from the N-terminus, the 348-residue chain is Anthranilate phosphoribosyltransferase (348 aa).

Residues Gly-89, 92-93 (GD), Thr-97, 99-102 (NIST), 117-125 (KHGNRSVSS), and Ser-129 contribute to the 5-phospho-alpha-D-ribose 1-diphosphate site. Gly-89 lines the anthranilate pocket. Ser-101 contributes to the Mg(2+) binding site. An anthranilate-binding site is contributed by Asn-120. Residue Arg-175 coordinates anthranilate. Mg(2+)-binding residues include Asp-233 and Glu-234.

It belongs to the anthranilate phosphoribosyltransferase family. In terms of assembly, homodimer. Requires Mg(2+) as cofactor.

It catalyses the reaction N-(5-phospho-beta-D-ribosyl)anthranilate + diphosphate = 5-phospho-alpha-D-ribose 1-diphosphate + anthranilate. The protein operates within amino-acid biosynthesis; L-tryptophan biosynthesis; L-tryptophan from chorismate: step 2/5. Its function is as follows. Catalyzes the transfer of the phosphoribosyl group of 5-phosphorylribose-1-pyrophosphate (PRPP) to anthranilate to yield N-(5'-phosphoribosyl)-anthranilate (PRA). The sequence is that of Anthranilate phosphoribosyltransferase from Shewanella sp. (strain W3-18-1).